Consider the following 146-residue polypeptide: Myoglobin (146 aa).

One can recognise a Globin domain in the interval 2-141 (GDFDMVLKFW…IIADIDATYK (140 aa)). His60 contributes to the nitrite binding site. His60 contributes to the O2 binding site. His89 is a heme b binding site.

Belongs to the globin family. Monomeric.

Its subcellular location is the cytoplasm. It is found in the sarcoplasm. It carries out the reaction Fe(III)-heme b-[protein] + nitric oxide + H2O = Fe(II)-heme b-[protein] + nitrite + 2 H(+). The catalysed reaction is H2O2 + AH2 = A + 2 H2O. In terms of biological role, monomeric heme protein which primary function is to store oxygen and facilitate its diffusion within muscle tissues. Reversibly binds oxygen through a pentacoordinated heme iron and enables its timely and efficient release as needed during periods of heightened demand. Depending on the oxidative conditions of tissues and cells, and in addition to its ability to bind oxygen, it also has a nitrite reductase activity whereby it regulates the production of bioactive nitric oxide. Under stress conditions, like hypoxia and anoxia, it also protects cells against reactive oxygen species thanks to its pseudoperoxidase activity. This chain is Myoglobin (mb), found in Tetraodon nigroviridis (Spotted green pufferfish).